The chain runs to 147 residues: Small ribosomal subunit protein uS12 (147 aa).

This sequence belongs to the universal ribosomal protein uS12 family. Part of the 30S ribosomal subunit.

Its function is as follows. With S4 and S5 plays an important role in translational accuracy. Located at the interface of the 30S and 50S subunits. This Ignicoccus hospitalis (strain KIN4/I / DSM 18386 / JCM 14125) protein is Small ribosomal subunit protein uS12.